Reading from the N-terminus, the 520-residue chain is Probable cytochrome P450 4p2 (520 aa).

Heme contacts are provided by Glu-325 and Cys-464.

The protein belongs to the cytochrome P450 family. Heme is required as a cofactor.

It localises to the endoplasmic reticulum membrane. The protein localises to the microsome membrane. May be involved in the metabolism of insect hormones and in the breakdown of synthetic insecticides. In Drosophila melanogaster (Fruit fly), this protein is Probable cytochrome P450 4p2 (Cyp4p2).